We begin with the raw amino-acid sequence, 278 residues long: Ras-related protein rapC (278 aa).

A GTP-binding site is contributed by 10–17 (GASGTGKT). Positions 32–40 (YDPTIEDLY) match the Effector region motif. Residues 58–62 (DTSGT) and 119–122 (NKCD) contribute to the GTP site. Disordered regions lie at residues 176–209 (NGSS…SSSS) and 236–278 (STSS…CLIM). Low complexity-rich tracts occupy residues 198-209 (GSNNSSINSSSS) and 236-251 (STSS…SQTN). Residue cysteine 275 is modified to Cysteine methyl ester. Residue cysteine 275 is the site of S-geranylgeranyl cysteine attachment. The propeptide at 276-278 (LIM) is removed in mature form.

Belongs to the small GTPase superfamily. Ras family.

The protein resides in the cell membrane. It carries out the reaction GTP + H2O = GDP + phosphate + H(+). This Dictyostelium discoideum (Social amoeba) protein is Ras-related protein rapC (rapC).